A 20-amino-acid chain; its full sequence is SSGAHGEEGSARMXKALTYF.

Belongs to the cytochrome c oxidase subunit 6A family. As to quaternary structure, component of the cytochrome c oxidase (complex IV, CIV), a multisubunit enzyme composed of 14 subunits. The complex is composed of a catalytic core of 3 subunits MT-CO1, MT-CO2 and MT-CO3, encoded in the mitochondrial DNA, and 11 supernumerary subunits COX4I, COX5A, COX5B, COX6A, COX6B, COX6C, COX7A, COX7B, COX7C, COX8 and NDUFA4, which are encoded in the nuclear genome. The complex exists as a monomer or a dimer and forms supercomplexes (SCs) in the inner mitochondrial membrane with NADH-ubiquinone oxidoreductase (complex I, CI) and ubiquinol-cytochrome c oxidoreductase (cytochrome b-c1 complex, complex III, CIII), resulting in different assemblies (supercomplex SCI(1)III(2)IV(1) and megacomplex MCI(2)III(2)IV(2)). As to expression, liver specific isoform.

The protein resides in the mitochondrion inner membrane. Its pathway is energy metabolism; oxidative phosphorylation. Its function is as follows. Component of the cytochrome c oxidase, the last enzyme in the mitochondrial electron transport chain which drives oxidative phosphorylation. The respiratory chain contains 3 multisubunit complexes succinate dehydrogenase (complex II, CII), ubiquinol-cytochrome c oxidoreductase (cytochrome b-c1 complex, complex III, CIII) and cytochrome c oxidase (complex IV, CIV), that cooperate to transfer electrons derived from NADH and succinate to molecular oxygen, creating an electrochemical gradient over the inner membrane that drives transmembrane transport and the ATP synthase. Cytochrome c oxidase is the component of the respiratory chain that catalyzes the reduction of oxygen to water. Electrons originating from reduced cytochrome c in the intermembrane space (IMS) are transferred via the dinuclear copper A center (CU(A)) of subunit 2 and heme A of subunit 1 to the active site in subunit 1, a binuclear center (BNC) formed by heme A3 and copper B (CU(B)). The BNC reduces molecular oxygen to 2 water molecules unsing 4 electrons from cytochrome c in the IMS and 4 protons from the mitochondrial matrix. The protein is Cytochrome c oxidase subunit 6A1, mitochondrial (COX6A1) of Canis lupus familiaris (Dog).